A 181-amino-acid chain; its full sequence is uncharacterized protein (181 aa).

The segment at 126–148 (SYKDKEEEEDEDPEEDDDDPRVQ) is disordered. The segment covering 131–144 (EEEEDEDPEEDDDD) has biased composition (acidic residues).

The protein belongs to the chlamydial CPn_0422/CT_273/TC_0545 family.

This is an uncharacterized protein from Chlamydia pneumoniae (Chlamydophila pneumoniae).